The chain runs to 410 residues: Porin-like protein GalP (410 aa).

A signal peptide spans 1–25 (MKCRTLYPLVPTFALAASLPLQALA).

This sequence belongs to the outer membrane porin (Opr) (TC 1.B.25) family.

In terms of biological role, probable transporter, possibly involved in the gallate degradation pathway. May play a role in the uptake of low gallate concentrations that may exist in the natural habitats of P.putida. The polypeptide is Porin-like protein GalP (galP) (Pseudomonas putida (strain ATCC 47054 / DSM 6125 / CFBP 8728 / NCIMB 11950 / KT2440)).